The primary structure comprises 485 residues: E3 ubiquitin-protein ligase TRIM34A (485 aa).

The RING-type zinc-finger motif lies at 15–59 (CPVCQELLTKALSLGCGHRVCQACLITKKNAVINPREKSSCPVCG). The B box-type zinc-finger motif lies at 91–132 (TKRDLCVHHGEKLLLFCKEDKKAICWVCERSQEHRGHHTFLW). Residues cysteine 96, histidine 99, cysteine 118, and histidine 124 each coordinate Zn(2+). Residues 136–170 (VRECQENLQKALTRLRKEQEKVETLEADIKEDRLS) are a coiled coil. Residues 282 to 485 (LSGMLQKFRE…APMTLCPLNS (204 aa)) enclose the B30.2/SPRY domain.

It belongs to the TRIM/RBCC family. Homotrimer. Interacts (via B-box and SPRY domain) with TRIM5.

It is found in the cytoplasm. Its subcellular location is the mitochondrion. It catalyses the reaction S-ubiquitinyl-[E2 ubiquitin-conjugating enzyme]-L-cysteine + [acceptor protein]-L-lysine = [E2 ubiquitin-conjugating enzyme]-L-cysteine + N(6)-ubiquitinyl-[acceptor protein]-L-lysine.. It participates in protein modification; protein ubiquitination. Functionally, functions as antiviral protein and contributes to the defense against retroviral infections. Acts as a capsid-specific restriction factor with the help of TRIM5 and prevents infection from non-host-adapted retroviruses. During influenza A virus infection, promotes programmed cell death by targeting ZBP1 for 'Lys-63'-linked polyubiquitination. In turn, promotes ZBP1 recruitment of RIPK3 to mediate virus-induced programmed necrosis. Negatively regulates the function of mitochondria by enhancing mitochondrial depolarization leading to cytochrome c release and mitochondria-dependent apoptosis. Also promotes the formation of multinucleated giant cells by means of cell fusion and phagocytosis in epithelial cells. Plays an essential role in sustaining the integrity of the inner mucus layer in the colon by controlling the exocytosis of the major component of colonic mucus MUC2 from colonic goblet cells. The sequence is that of E3 ubiquitin-protein ligase TRIM34A from Mus musculus (Mouse).